The following is a 345-amino-acid chain: Large ribosomal subunit protein uL10 (345 aa).

A disordered region spans residues 303-345 (SLPQTAAPQQTPQPTEAPKEEAQEEKKEGPSEEEIAGSLASLF). The segment covering 305–318 (PQTAAPQQTPQPTE) has biased composition (low complexity). Over residues 319 to 332 (APKEEAQEEKKEGP) the composition is skewed to basic and acidic residues.

This sequence belongs to the universal ribosomal protein uL10 family. Part of the 50S ribosomal subunit. Forms part of the ribosomal stalk which helps the ribosome interact with GTP-bound translation factors. Forms a heptameric L10(L12)2(L12)2(L12)2 complex, where L10 forms an elongated spine to which the L12 dimers bind in a sequential fashion.

In terms of biological role, forms part of the ribosomal stalk, playing a central role in the interaction of the ribosome with GTP-bound translation factors. This is Large ribosomal subunit protein uL10 from Pyrobaculum aerophilum (strain ATCC 51768 / DSM 7523 / JCM 9630 / CIP 104966 / NBRC 100827 / IM2).